We begin with the raw amino-acid sequence, 341 residues long: TERF1-interacting nuclear factor 2 (341 aa).

At Ala-2 the chain carries N-acetylalanine. The short motif at 243 to 265 is the TBM element; sequence HRFNLAPLGKRKSRSHWTSAKAC. The short motif at 249–255 is the Nuclear localization signal element; that stretch reads PLGKRKS. Residues 283–341 are disordered; the sequence is PAQDLSNPKSREEPGAASAASVGTEPVCTEEAKTPSRPLGKRALEETPPDSPAASRRTV.

In terms of assembly, monomer. Found in a complex with POT1; TERF1 and TNKS1. Component of the shelterin complex (telosome) composed of TERF1, TERF2, TINF2, TERF2IP, ACD and POT1. Interacts with TERF1.

Its subcellular location is the nucleus. It is found in the chromosome. The protein localises to the telomere. Component of the shelterin complex (telosome) that is involved in the regulation of telomere length and protection. Shelterin associates with arrays of double-stranded TTAGGG repeats added by telomerase and protects chromosome ends; without its protective activity, telomeres are no longer hidden from the DNA damage surveillance and chromosome ends are inappropriately processed by DNA repair pathways. Plays a role in shelterin complex assembly. The sequence is that of TERF1-interacting nuclear factor 2 (Tinf2) from Mus musculus (Mouse).